A 425-amino-acid polypeptide reads, in one-letter code: UDP-N-acetylglucosamine 1-carboxyvinyltransferase (425 aa).

Position 25–26 (25–26 (KN)) interacts with phosphoenolpyruvate. A UDP-N-acetyl-alpha-D-glucosamine-binding site is contributed by arginine 95. Cysteine 119 functions as the Proton donor in the catalytic mechanism. Cysteine 119 is modified (2-(S-cysteinyl)pyruvic acid O-phosphothioketal). Residues 124-128 (RPVDQ), aspartate 306, and isoleucine 328 contribute to the UDP-N-acetyl-alpha-D-glucosamine site.

This sequence belongs to the EPSP synthase family. MurA subfamily.

It localises to the cytoplasm. It catalyses the reaction phosphoenolpyruvate + UDP-N-acetyl-alpha-D-glucosamine = UDP-N-acetyl-3-O-(1-carboxyvinyl)-alpha-D-glucosamine + phosphate. The protein operates within cell wall biogenesis; peptidoglycan biosynthesis. Its function is as follows. Cell wall formation. Adds enolpyruvyl to UDP-N-acetylglucosamine. The chain is UDP-N-acetylglucosamine 1-carboxyvinyltransferase from Thermus thermophilus (strain ATCC 27634 / DSM 579 / HB8).